Here is a 197-residue protein sequence, read N- to C-terminus: Ubiquitin-conjugating enzyme E2 T (197 aa).

A UBC core domain is found at 2–152 (QRASRLKREL…ARQWTEKHAR (151 aa)). The active-site Glycyl thioester intermediate is the Cys-86. Glycyl lysine isopeptide (Lys-Gly) (interchain with G-Cter in ubiquitin) cross-links involve residues Lys-91 and Lys-182. Residues 149 to 197 (KHARQKQKADEEEMLDNLPEAGDSRVHNSTQKRKASQLVGIEKKFHPDV) are disordered. A Phosphoserine modification is found at Ser-184. Residues Lys-191 and Lys-192 each participate in a glycyl lysine isopeptide (Lys-Gly) (interchain with G-Cter in SUMO2) cross-link.

The protein belongs to the ubiquitin-conjugating enzyme family. As to quaternary structure, directly interacts with FANCL. Interacts with BRCA1. In terms of processing, auto-ubiquitinated. Effects of auto-monoubiquitination at Lys-91 and Lys-182 are unclear: according to a report, monoubiquitination inactivates E2 enzyme activity. In contrast, according to another report, autoubiquitination does not affect E2 enzyme activity.

It is found in the nucleus. It catalyses the reaction S-ubiquitinyl-[E1 ubiquitin-activating enzyme]-L-cysteine + [E2 ubiquitin-conjugating enzyme]-L-cysteine = [E1 ubiquitin-activating enzyme]-L-cysteine + S-ubiquitinyl-[E2 ubiquitin-conjugating enzyme]-L-cysteine.. The protein operates within protein modification; protein ubiquitination. Accepts ubiquitin from the E1 complex and catalyzes its covalent attachment to other proteins. Catalyzes monoubiquitination. Involved in mitomycin-C (MMC)-induced DNA repair. Acts as a specific E2 ubiquitin-conjugating enzyme for the Fanconi anemia complex by associating with E3 ubiquitin-protein ligase FANCL and catalyzing monoubiquitination of FANCD2, a key step in the DNA damage pathway. Also mediates monoubiquitination of FANCL and FANCI. May contribute to ubiquitination and degradation of BRCA1. In vitro able to promote polyubiquitination using all 7 ubiquitin Lys residues, but may prefer 'Lys-11'-, 'Lys-27'-, 'Lys-48'- and 'Lys-63'-linked polyubiquitination. The polypeptide is Ubiquitin-conjugating enzyme E2 T (UBE2T) (Homo sapiens (Human)).